The sequence spans 118 residues: Beta-2-microglobulin (118 aa).

Positions Met1–Ala20 are cleaved as a signal peptide. Residues Pro22–Asp115 form the Ig-like C1-type domain. Cys45 and Cys99 are disulfide-bonded.

This sequence belongs to the beta-2-microglobulin family. In terms of assembly, heterodimer of an alpha chain and a beta chain. Beta-2-microglobulin is the beta-chain of major histocompatibility complex class I molecules.

The protein localises to the secreted. In terms of biological role, component of the class I major histocompatibility complex (MHC). Involved in the presentation of peptide antigens to the immune system. The protein is Beta-2-microglobulin (B2M) of Equus caballus (Horse).